A 202-amino-acid chain; its full sequence is 3-isopropylmalate dehydratase small subunit (202 aa).

This sequence belongs to the LeuD family. LeuD type 1 subfamily. In terms of assembly, heterodimer of LeuC and LeuD.

It catalyses the reaction (2R,3S)-3-isopropylmalate = (2S)-2-isopropylmalate. It functions in the pathway amino-acid biosynthesis; L-leucine biosynthesis; L-leucine from 3-methyl-2-oxobutanoate: step 2/4. Its function is as follows. Catalyzes the isomerization between 2-isopropylmalate and 3-isopropylmalate, via the formation of 2-isopropylmaleate. The protein is 3-isopropylmalate dehydratase small subunit of Blochmanniella pennsylvanica (strain BPEN).